Consider the following 62-residue polypeptide: Large ribosomal subunit protein bL28 (62 aa).

This sequence belongs to the bacterial ribosomal protein bL28 family.

The polypeptide is Large ribosomal subunit protein bL28 (Aliarcobacter butzleri (strain RM4018) (Arcobacter butzleri)).